Consider the following 438-residue polypeptide: Alkylcitrate synthase tstJ (438 aa).

Residues His309 and Asp365 contribute to the active site.

This sequence belongs to the citrate synthase family.

It carries out the reaction (2E,10E)-dode-2,10-dicenoyl-CoA + oxaloacetate + H2O = (4E,11E)-2-hydroxytrideca-4,11-dien-1,2,3-tricarboxylate + CoA + H(+). The protein operates within secondary metabolite biosynthesis. Its function is as follows. Alkylcitrate synthase; part of the gene cluster that mediates the biosynthesis of the antihypercholesterolemic agents phomoidrides which are dimeric anhydrides. Within the pathway, the alkylcitrate synthase (ACS) tstJ and the alkylcitrate dehydratase (ACDH) tstI produce the decarboxylated monomeric anhydrides by coupling the C12-fatty acyl product from phiA with oxalacetic acid. The pathway begins with the highly reducing polyketide synthase tstA that catalyzes the formation of a C12-fatty acyl-ACP, starting from one acetate and 5 malonate units. The hydrolase tstM is involved in the release of the C12-fatty acyl chain from phiA. The alkylcitrate synthase (ACS) tstJ and the alkylcitrate dehydratase (ACDH) tstI then give rise to decarboxylated monomeric anhydrides by coupling the C12-fatty acyl chain with oxalacetic acid. The cyclase tstC is responsible for the dimerization of the monomeric anhydrides which leads to the production of prephomoidride that contains the characteristic bicyclo[4.3.1]deca-1,6-diene system of phomoidrides. Iterative oxidation catalyzed by the alpha-ketoglutarate-dependent dioxygenase tstK produced then phomoidride A. Finally, the methyltransferase tstE converts phomoidride A to phomoidride B via an acetalization reaction. The phosphatidylethanolamine-binding protein tstB and tstN are not essential for dimerization and their functions have still to be determined. In Talaromyces stipitatus (strain ATCC 10500 / CBS 375.48 / QM 6759 / NRRL 1006) (Penicillium stipitatum), this protein is Alkylcitrate synthase tstJ.